The primary structure comprises 341 residues: HTH-type transcriptional repressor PurR (341 aa).

Residues 2 to 56 form the HTH lacI-type domain; it reads ATIKDVAKRANVSTTTVSHVINKTRFVAEETRNAVWAAIKELHYSPSAVARSLKV. Positions 4-23 form a DNA-binding region, H-T-H motif; that stretch reads IKDVAKRANVSTTTVSHVIN. Residues 48–56 mediate DNA binding; the sequence is SAVARSLKV. Hypoxanthine-binding residues include tyrosine 73, arginine 190, threonine 192, phenylalanine 221, and aspartate 275.

Homodimer.

It functions in the pathway purine metabolism; purine nucleotide biosynthesis [regulation]. In terms of biological role, is the main repressor of the genes involved in the de novo synthesis of purine nucleotides, regulating purB, purC, purEK, purF, purHD, purL, purMN and guaBA expression. PurR is allosterically activated to bind its cognate DNA by binding the purine corepressors, hypoxanthine or guanine, thereby effecting transcription repression. This chain is HTH-type transcriptional repressor PurR, found in Shigella sonnei (strain Ss046).